Reading from the N-terminus, the 432-residue chain is Pachytene checkpoint protein 2 homolog (432 aa).

An N-acetylmethionine modification is found at M1. 179 to 186 (GPPGTGKT) is a binding site for ATP.

It belongs to the AAA ATPase family. PCH2 subfamily. As to quaternary structure, specifically interacts with the ligand binding domain of the thyroid receptor (TR). This interaction does not require the presence of thyroid hormone for its interaction. Interacts with HPV16 E1. Interacts with proteasome subunit PSMA8; to participate in meiosis progression during spermatogenesis.

Its function is as follows. Plays a key role in chromosome recombination and chromosome structure development during meiosis. Required at early steps in meiotic recombination that leads to non-crossovers pathways. Also needed for efficient completion of homologous synapsis by influencing crossover distribution along the chromosomes affecting both crossovers and non-crossovers pathways. Also required for development of higher-order chromosome structures and is needed for synaptonemal-complex formation. In males, required for efficient synapsis of the sex chromosomes and for sex body formation. Promotes early steps of the DNA double-strand breaks (DSBs) repair process upstream of the assembly of RAD51 complexes. Required for depletion of HORMAD1 and HORMAD2 from synapsed chromosomes. Plays a role in mitotic spindle assembly checkpoint (SAC) activation. In Homo sapiens (Human), this protein is Pachytene checkpoint protein 2 homolog (TRIP13).